A 169-amino-acid polypeptide reads, in one-letter code: Small ribosomal subunit protein uS5 (169 aa).

Residues 13 to 76 (LVEKLVSVRR…EKARRNMKDV (64 aa)) enclose the S5 DRBM domain.

This sequence belongs to the universal ribosomal protein uS5 family. In terms of assembly, part of the 30S ribosomal subunit. Contacts proteins S4 and S8.

Functionally, with S4 and S12 plays an important role in translational accuracy. Located at the back of the 30S subunit body where it stabilizes the conformation of the head with respect to the body. The polypeptide is Small ribosomal subunit protein uS5 (Hydrogenovibrio crunogenus (strain DSM 25203 / XCL-2) (Thiomicrospira crunogena)).